The following is a 2357-amino-acid chain: Myosin-I heavy chain (2357 aa).

Residues Q13–K688 enclose the Myosin motor domain. G106–T113 provides a ligand contact to ATP. The tract at residues Y579–N586 is actin-binding. The IQ domain occupies L691 to I720. Positions K787–D891 form a coiled coil. Positions K787 to P1076 are binding to talin A. Disordered stretches follow at residues I797–L852 and A974–P1112. Low complexity-rich tracts occupy residues N1003–S1025 and T1078–N1106. The region spanning Y1155–K1313 is the MyTH4 1 domain. In terms of domain architecture, FERM 1 spans I1318–A1620. In terms of domain architecture, SH3 spans N1618 to S1678. The tract at residues V1686 to A1849 is disordered. The span at T1706 to S1733 shows a compositional bias: pro residues. Low complexity-rich tracts occupy residues V1734–L1746 and S1755–M1770. Polar residues predominate over residues F1817–T1828. The MyTH4 2 domain occupies F1894–R2051. Positions S2060–Q2357 constitute an FERM 2 domain.

The protein belongs to the TRAFAC class myosin-kinesin ATPase superfamily. Myosin family. In terms of assembly, monomer. Interacts with talA.

It is found in the cytoplasm. In terms of biological role, myosins are actin-based motor molecules with ATPase activity. Involved in the early steps of phagocytosis and adhesion. In Dictyostelium discoideum (Social amoeba), this protein is Myosin-I heavy chain (myoI).